Consider the following 445-residue polypeptide: Guanosine nucleotide diphosphate dissociation inhibitor 1 (445 aa).

It belongs to the Rab GDI family. In terms of assembly, interacts with the GDP-bound form of RABA5C (via C-terminus). Expressed in roots, rosette leaves, stems, floral buds and siliques.

Functionally, regulates the GDP/GTP exchange reaction of most RAB proteins by inhibiting the dissociation of GDP from them, and the subsequent binding of GTP. The protein is Guanosine nucleotide diphosphate dissociation inhibitor 1 (GDI1) of Arabidopsis thaliana (Mouse-ear cress).